We begin with the raw amino-acid sequence, 238 residues long: DNA repair protein RecO (238 aa).

Belongs to the RecO family.

Functionally, involved in DNA repair and RecF pathway recombination. This Flavobacterium psychrophilum (strain ATCC 49511 / DSM 21280 / CIP 103535 / JIP02/86) protein is DNA repair protein RecO.